A 178-amino-acid chain; its full sequence is MASISSSVATVSRTAPAQANMVAPFTGLKSNAAFPTTKKANDFSTLPSNGGRVQCMKVWPPLGLKKYETLSYLPPLTETQLAKEVDYLLRKKWVPCLEFELEHGFVYRENARSPGYYDGRYWTMWKLPMFGCTDSAQVMKELAECKKEYPQAWIRIIGFDNVRQVQCIMFIASRPDGY.

Residues 1 to 54 constitute a chloroplast transit peptide; the sequence is MASISSSVATVSRTAPAQANMVAPFTGLKSNAAFPTTKKANDFSTLPSNGGRVQ.

This sequence belongs to the RuBisCO small chain family. As to quaternary structure, heterohexadecamer of 8 large and 8 small subunits.

The protein resides in the plastid. Its subcellular location is the chloroplast. Its function is as follows. RuBisCO catalyzes two reactions: the carboxylation of D-ribulose 1,5-bisphosphate, the primary event in carbon dioxide fixation, as well as the oxidative fragmentation of the pentose substrate. Both reactions occur simultaneously and in competition at the same active site. Although the small subunit is not catalytic it is essential for maximal activity. The protein is Ribulose bisphosphate carboxylase small subunit, chloroplastic of Helianthus annuus (Common sunflower).